The sequence spans 563 residues: Beta-catenin-like protein 1 (563 aa).

An N-acetylmethionine modification is found at M1. A disordered region spans residues 1–81 (MDVGELLSYQ…EEEEPLDESS (81 aa)). Residues 16 to 33 (KRPRDDEEEELKTRRKQT) carry the Nuclear localization signal motif. The segment covering 34-45 (GPRERGRYREEE) has biased composition (basic and acidic residues). Positions 66 to 78 (DGEEEEEEEEPLD) are enriched in acidic residues. 2 HEAT repeats span residues 79 to 129 (ESSV…VVAT) and 134 to 176 (YHLL…TLHE). An N6-acetyllysine modification is found at K91. Residues 130–140 (MPDLYHLLVEL) carry the Nuclear export signal (NES) motif. ARM repeat units lie at residues 178-228 (EEGA…MAEF), 229-273 (RPEM…LQDN), 274-323 (DENR…CLML), 325-363 (SNRE…AMIG), and 364-417 (PEGT…LLRN). S389 is modified (phosphoserine). A coiled-coil region spans residues 476–540 (DMEDEFYLRR…HIIKEYAENI (65 aa)). Position 545 is a phosphoserine (S545).

In terms of assembly, component of the PRP19-CDC5L splicing complex composed of a core complex comprising a homotetramer of PRPF19, CDC5L, PLRG1 and BCAS2, and at least three less stably associated proteins CTNNBL1, CWC15 and HSPA8. Interacts directly with CWC15 and CDC5L in the complex. Interacts with AICDA; the interaction is important for the antibody diversification activity of AICDA. Interacts with PRPF31 (via its NLS). Interacts (via its N-terminal NLS) with KPNA1 and KPNA2.

The protein resides in the nucleus. Its function is as follows. Component of the PRP19-CDC5L complex that forms an integral part of the spliceosome and is required for activating pre-mRNA splicing. Participates in AID/AICDA-mediated somatic hypermutation (SHM) and class-switch recombination (CSR), 2 processes resulting in the production of high-affinity, mutated isotype-switched antibodies. The protein is Beta-catenin-like protein 1 (Ctnnbl1) of Mus musculus (Mouse).